The primary structure comprises 119 residues: Parathyroid hormone (119 aa).

An N-terminal signal peptide occupies residues 1 to 25 (MTSTKNLAKAIVILYAICFFTNSDG). The propeptide occupies 26–31 (RPMMKR).

Belongs to the parathyroid hormone family. Interacts with PTH1R (via N-terminal extracellular domain).

It is found in the secreted. Its function is as follows. Parathyroid hormone elevates calcium level by dissolving the salts in bone and preventing their renal excretion. Acts by binding to its receptor, PTH1R, activating G protein-coupled receptor signaling. Stimulates [1-14C]-2-deoxy-D-glucose (2DG) transport and glycogen synthesis in osteoblastic cells. In Gallus gallus (Chicken), this protein is Parathyroid hormone.